The following is a 673-amino-acid chain: Cell division cycle protein 23 homolog (673 aa).

TPR repeat units follow at residues 86 to 120 (AEMW…VLDN), 159 to 195 (NKEF…YQEH), 232 to 267 (EDVW…EPRI), 332 to 365 (PMII…DPYR), 400 to 433 (WETC…NPGL), 434 to 467 (AALW…DPAD), 469 to 501 (RGWY…KPHD), 502 to 535 (SRLL…GDVE), 539 to 572 (LWSL…VTSA), and 577 to 610 (IYAI…ETLC). Residues 628 to 673 (SRLPVEEAPGPSNASAAGGQEAMDTEEAPQEGGEEEMSEGEDDFSF) form a disordered region. Residues 635–646 (APGPSNASAAGG) are compositionally biased toward low complexity. Acidic residues predominate over residues 650–673 (MDTEEAPQEGGEEEMSEGEDDFSF).

The protein belongs to the APC8/CDC23 family. As to quaternary structure, the APC/C complex is probably composed of at least 12 subunits: apc-2, apc-10, apc-11, cdc-26, emb-1, emb-27, emb-30, mat-1, mat-2, mat-3, such-1 and gfi-3.

It participates in protein modification; protein ubiquitination. In terms of biological role, probable component of the anaphase promoting complex/cyclosome (APC/C), a cell cycle-regulated E3 ubiquitin ligase that controls progression through mitosis and the G1 phase of the cell cycle. The APC/C complex acts by mediating ubiquitination and subsequent degradation of target proteins. Developmental role in early embryogenesis and the metaphase to anaphase transition in oocyte and spermatocyte meiosis and mitosis in germ cells. Required for embryonic anterior-posterior axis formation. Plays a role in regulating the abundance of glr-1 receptors in postmitotic neurons, which may in turn control animal locomotion. Involved in regulating GABA neurotransmitter release at neuromuscular junctions in GABA motor neurons. In Caenorhabditis elegans, this protein is Cell division cycle protein 23 homolog.